The chain runs to 397 residues: Subtilisin-like serine protease Pen ch 13.0101 (397 aa).

A signal peptide spans 1–19; the sequence is MGFLKVLATSLATLAVVDA. A propeptide spans 20 to 115 (removed in mature form); that stretch reads GTLLTASNTD…IEPDMIVNAT (96 aa). An Inhibitor I9 domain is found at 35-113; sequence SYIVVMNDDV…KYIEPDMIVN (79 aa). The N-linked (GlcNAc...) asparagine glycan is linked to Asn113. The Peptidase S8 domain maps to 125-397; that stretch reads SWGLARISSK…SKLLYNGINV (273 aa). Residues Asp157 and His188 each act as charge relay system in the active site. 2 N-linked (GlcNAc...) asparagine glycosylation sites follow: Asn249 and Asn284. The active-site Charge relay system is Ser343.

It belongs to the peptidase S8 family.

It is found in the secreted. Its function is as follows. Serine protease. This chain is Subtilisin-like serine protease Pen ch 13.0101, found in Penicillium rubens.